We begin with the raw amino-acid sequence, 242 residues long: Phosphoribosylaminoimidazole-succinocarboxamide synthase (242 aa).

This sequence belongs to the SAICAR synthetase family.

The enzyme catalyses 5-amino-1-(5-phospho-D-ribosyl)imidazole-4-carboxylate + L-aspartate + ATP = (2S)-2-[5-amino-1-(5-phospho-beta-D-ribosyl)imidazole-4-carboxamido]succinate + ADP + phosphate + 2 H(+). The protein operates within purine metabolism; IMP biosynthesis via de novo pathway; 5-amino-1-(5-phospho-D-ribosyl)imidazole-4-carboxamide from 5-amino-1-(5-phospho-D-ribosyl)imidazole-4-carboxylate: step 1/2. This chain is Phosphoribosylaminoimidazole-succinocarboxamide synthase, found in Pediococcus pentosaceus (strain ATCC 25745 / CCUG 21536 / LMG 10740 / 183-1w).